Consider the following 381-residue polypeptide: L-lactate dehydrogenase (381 aa).

The 380-residue stretch at 1–380 (MIISASTDYR…TRDSLVRELG (380 aa)) folds into the FMN hydroxy acid dehydrogenase domain. Substrate is bound at residue Tyr-24. Ser-106 and Gln-127 together coordinate FMN. Tyr-129 serves as a coordination point for substrate. Thr-155 is a binding site for FMN. Arg-164 contributes to the substrate binding site. Position 251 (Lys-251) interacts with FMN. Catalysis depends on His-275, which acts as the Proton acceptor. Arg-278 serves as a coordination point for substrate. An FMN-binding site is contributed by 306 to 330 (DSGIRSGLDVVRMIALGADTVLIGR).

It belongs to the FMN-dependent alpha-hydroxy acid dehydrogenase family. Homotetramer. The cofactor is FMN.

It localises to the cell inner membrane. The enzyme catalyses (S)-lactate + A = pyruvate + AH2. Functionally, catalyzes the conversion of L-lactate to pyruvate. Is coupled to the respiratory chain. In Pseudomonas putida (strain GB-1), this protein is L-lactate dehydrogenase.